The chain runs to 362 residues: 3-isopropylmalate dehydrogenase (362 aa).

78 to 91 (GPKWETLPPDEQPE) serves as a coordination point for NAD(+). Residues R99, R109, R138, and D227 each contribute to the substrate site. Mg(2+)-binding residues include D227, D251, and D255. Residue 285 to 297 (GSAPDIAGQGIAN) participates in NAD(+) binding.

The protein belongs to the isocitrate and isopropylmalate dehydrogenases family. LeuB type 1 subfamily. As to quaternary structure, homodimer. The cofactor is Mg(2+). It depends on Mn(2+) as a cofactor.

Its subcellular location is the cytoplasm. It carries out the reaction (2R,3S)-3-isopropylmalate + NAD(+) = 4-methyl-2-oxopentanoate + CO2 + NADH. It functions in the pathway amino-acid biosynthesis; L-leucine biosynthesis; L-leucine from 3-methyl-2-oxobutanoate: step 3/4. Its function is as follows. Catalyzes the oxidation of 3-carboxy-2-hydroxy-4-methylpentanoate (3-isopropylmalate) to 3-carboxy-4-methyl-2-oxopentanoate. The product decarboxylates to 4-methyl-2 oxopentanoate. This is 3-isopropylmalate dehydrogenase from Geobacter metallireducens (strain ATCC 53774 / DSM 7210 / GS-15).